We begin with the raw amino-acid sequence, 724 residues long: Phosphoribosylformylglycinamidine synthase subunit PurL (724 aa).

The active site involves His-34. Residues Tyr-37 and Lys-75 each contribute to the ATP site. Position 77 (Glu-77) interacts with Mg(2+). Residues 78–81 and Arg-100 each bind substrate; that span reads SHNH. The active-site Proton acceptor is His-79. Asp-101 provides a ligand contact to Mg(2+). Gln-221 contacts substrate. Mg(2+) is bound at residue Asp-249. 292 to 294 serves as a coordination point for substrate; sequence ESQ. ATP-binding residues include Asp-478 and Gly-515. Ser-518 contacts substrate.

This sequence belongs to the FGAMS family. In terms of assembly, monomer. Part of the FGAM synthase complex composed of 1 PurL, 1 PurQ and 2 PurS subunits.

The protein localises to the cytoplasm. The enzyme catalyses N(2)-formyl-N(1)-(5-phospho-beta-D-ribosyl)glycinamide + L-glutamine + ATP + H2O = 2-formamido-N(1)-(5-O-phospho-beta-D-ribosyl)acetamidine + L-glutamate + ADP + phosphate + H(+). It participates in purine metabolism; IMP biosynthesis via de novo pathway; 5-amino-1-(5-phospho-D-ribosyl)imidazole from N(2)-formyl-N(1)-(5-phospho-D-ribosyl)glycinamide: step 1/2. Its function is as follows. Part of the phosphoribosylformylglycinamidine synthase complex involved in the purines biosynthetic pathway. Catalyzes the ATP-dependent conversion of formylglycinamide ribonucleotide (FGAR) and glutamine to yield formylglycinamidine ribonucleotide (FGAM) and glutamate. The FGAM synthase complex is composed of three subunits. PurQ produces an ammonia molecule by converting glutamine to glutamate. PurL transfers the ammonia molecule to FGAR to form FGAM in an ATP-dependent manner. PurS interacts with PurQ and PurL and is thought to assist in the transfer of the ammonia molecule from PurQ to PurL. The chain is Phosphoribosylformylglycinamidine synthase subunit PurL from Caldivirga maquilingensis (strain ATCC 700844 / DSM 13496 / JCM 10307 / IC-167).